The following is a 654-amino-acid chain: MAPKKPSCLRSLLLPLSLTLLLPQADTRSFIVDRDHDRFLLDGAPFRYVSGSLHYFRVPRVLWADRLLKMRWSGLNAIQFYVPWNYHEPQPGVYNFNGSRDLIAFLNEAALANLLVILRPGPYICAEWEMGGLPSWLLRKPEIRLRTSDPDFLAAVDSWFKVLLPKIYPWLYHNGGNIISIQVENEYGSYGACDFSYMRHLAGLFRALLGEKILLFTTDGPEGLKCGSLQGLYTTVDFGPADNMTKIFTLLRKYEPHGPLVNSEYYTGWLDYWGQNHSTRSVSAVTKGLENMLKLGASVNMYMFHGGTNFGYWNGADKKGRFLSITTSYDYDAPISEAGDPTPKLFALRDVISKFQEVPLGPLPPPSPKMMVGPLTLHLVGHLLAFLDLLCPSGPIRSILPMTFEAVKQDRGFMLYRTYMTHTIFEPTPFWVPNNGVHDRAYVMVDGVFQGVLERNMRDKLFLMGKVGSKLDILVENMGRLSFGSNSSDFKGLLEPPILGQTILTQWMMFPLKIDNLVKWWFLLQLPKWPYPQAPSGPTFYSKTFPILGSVGDTFLHLPGWTKGQVWINGFNLGRYWTKRGPQQTLYVPRFLLFPRGALNKITLLELENVPLQPQVQFLDKPILNSTSTLHRTHINSLSADTLSASEPMELSGH.

An N-terminal signal peptide occupies residues 1-27; it reads MAPKKPSCLRSLLLPLSLTLLLPQADT. An N-linked (GlcNAc...) asparagine glycan is attached at Asn-97. Glu-186 (proton donor) is an active-site residue. N-linked (GlcNAc...) asparagine glycosylation is present at Asn-243. Glu-264 functions as the Nucleophile in the catalytic mechanism.

It belongs to the glycosyl hydrolase 35 family.

The protein localises to the secreted. In terms of biological role, probable glycosyl hydrolase. This Macaca fascicularis (Crab-eating macaque) protein is Beta-galactosidase-1-like protein (GLB1L).